The sequence spans 327 residues: Zinc transport protein ZntB (327 aa).

At methionine 1–methionine 273 the chain is on the cytoplasmic side. Residues alanine 274 to isoleucine 294 traverse the membrane as a helical segment. The Periplasmic portion of the chain corresponds to proline 295–histidine 300. Residues leucine 301–leucine 321 traverse the membrane as a helical segment. Over histidine 322–leucine 327 the chain is Cytoplasmic.

It belongs to the CorA metal ion transporter (MIT) (TC 1.A.35) family.

It localises to the cell inner membrane. It catalyses the reaction Zn(2+)(out) + H(+)(out) = Zn(2+)(in) + H(+)(in). Functionally, zinc transporter. Acts as a Zn(2+):proton symporter, which likely mediates zinc ion uptake. The sequence is that of Zinc transport protein ZntB from Cronobacter sakazakii (strain ATCC BAA-894) (Enterobacter sakazakii).